We begin with the raw amino-acid sequence, 97 residues long: Cornifin (97 aa).

The disordered stretch occupies residues Met-1–His-42. Ser-2 carries the N-acetylserine modification. 9 repeat units span residues Ser-3–Pro-14, Gln-18–Pro-29, Glu-31–Lys-38, Glu-39–Pro-46, Glu-47–Pro-54, Glu-55–Pro-62, Glu-63–Pro-70, Glu-71–Pro-78, and Glu-79–Val-85. Positions Ser-3–Pro-29 are 2 X 12 AA approximate repeats. The interval Glu-31 to Val-85 is 7 X 8 AA approximate tandem repeats.

Belongs to the cornifin (SPRR) family. In terms of tissue distribution, not detected in normal lung tissue but seen in tumor tissues. Cells around the keratin pearls contain high levels.

It localises to the cytoplasm. In terms of biological role, cross-linked envelope protein of keratinocytes. It is a keratinocyte protein that first appears in the cell cytosol, but ultimately becomes cross-linked to membrane proteins by transglutaminase. All that results in the formation of an insoluble envelope beneath the plasma membrane. The protein is Cornifin (SPRP) of Sus scrofa (Pig).